We begin with the raw amino-acid sequence, 383 residues long: ATP phosphoribosyltransferase regulatory subunit (383 aa).

This sequence belongs to the class-II aminoacyl-tRNA synthetase family. HisZ subfamily. Heteromultimer composed of HisG and HisZ subunits.

It localises to the cytoplasm. The protein operates within amino-acid biosynthesis; L-histidine biosynthesis; L-histidine from 5-phospho-alpha-D-ribose 1-diphosphate: step 1/9. Its function is as follows. Required for the first step of histidine biosynthesis. May allow the feedback regulation of ATP phosphoribosyltransferase activity by histidine. This chain is ATP phosphoribosyltransferase regulatory subunit, found in Cupriavidus metallidurans (strain ATCC 43123 / DSM 2839 / NBRC 102507 / CH34) (Ralstonia metallidurans).